Consider the following 512-residue polypeptide: Protein spinster homolog 3 (512 aa).

A disordered region spans residues 1-30 (MAGGMSAECPEPGPGGLQGQSPGPGRQCPP). Transmembrane regions (helical) follow at residues 50–70 (VLCY…GVLL), 84–104 (GLLQ…FGYL), 112–132 (ATMS…SFIS), 145–165 (IVGT…GDLF), 173–193 (VLAV…VLGS), 204–224 (WALR…ILLV), 260–280 (FVWS…LGFW), 309–329 (LIFG…GAEA), 343–365 (LICA…LAPT), 377–397 (GELL…SVVV), 411–431 (VGHI…SSVL), and 450–470 (FLCC…TALY). The tract at residues 481–512 (PVTGTPDSNDVDSNDLERQGLLSGAGASTEEP) is disordered.

Belongs to the major facilitator superfamily. Spinster (TC 2.A.1.49) family.

The protein localises to the membrane. Sphingolipid transporter. The chain is Protein spinster homolog 3 (SPNS3) from Homo sapiens (Human).